A 134-amino-acid polypeptide reads, in one-letter code: D-ribose pyranase (134 aa).

The active-site Proton donor is His20. Residues Asp28, His101, and 123–125 each bind substrate; that span reads YSN.

This sequence belongs to the RbsD / FucU family. RbsD subfamily. In terms of assembly, homodecamer.

The protein resides in the cytoplasm. It catalyses the reaction beta-D-ribopyranose = beta-D-ribofuranose. It functions in the pathway carbohydrate metabolism; D-ribose degradation; D-ribose 5-phosphate from beta-D-ribopyranose: step 1/2. Functionally, catalyzes the interconversion of beta-pyran and beta-furan forms of D-ribose. The protein is D-ribose pyranase of Pseudomonas syringae pv. syringae (strain B728a).